The following is a 452-amino-acid chain: Pup--protein ligase (452 aa).

Residue Glu-9 coordinates Mg(2+). An ATP-binding site is contributed by Arg-53. Tyr-55 provides a ligand contact to Mg(2+). The active-site Proton acceptor is Asp-57. Mg(2+) is bound at residue Glu-63. Residues Thr-66 and Trp-419 each coordinate ATP.

This sequence belongs to the Pup ligase/Pup deamidase family. Pup-conjugating enzyme subfamily.

The enzyme catalyses ATP + [prokaryotic ubiquitin-like protein]-L-glutamate + [protein]-L-lysine = ADP + phosphate + N(6)-([prokaryotic ubiquitin-like protein]-gamma-L-glutamyl)-[protein]-L-lysine.. The protein operates within protein degradation; proteasomal Pup-dependent pathway. It participates in protein modification; protein pupylation. Its function is as follows. Catalyzes the covalent attachment of the prokaryotic ubiquitin-like protein modifier Pup to the proteasomal substrate proteins, thereby targeting them for proteasomal degradation. This tagging system is termed pupylation. The ligation reaction involves the side-chain carboxylate of the C-terminal glutamate of Pup and the side-chain amino group of a substrate lysine. The chain is Pup--protein ligase from Nakamurella multipartita (strain ATCC 700099 / DSM 44233 / CIP 104796 / JCM 9543 / NBRC 105858 / Y-104) (Microsphaera multipartita).